Here is a 532-residue protein sequence, read N- to C-terminus: E3 ubiquitin-protein ligase ICP0 (532 aa).

Zn(2+)-binding residues include Cys8, Cys11, Cys24, His26, Cys29, Cys32, Cys43, and Cys46. The RING-type zinc-finger motif lies at 8–47 (CPICLEDPSNYSMALPCLHAFCYVCITRWIRQNPTCPLCK). Disordered stretches follow at residues 206 to 391 (EYID…PMRP), 406 to 426 (APRDSSTSEAAGPSRLGAGPR), 461 to 498 (EDESARRRGNVLLRPRRQSVPPVPYPDIASTSPLIRQG), and 510 to 532 (QTQPAEPEEMRCPHNCQRYRRNQ). Composition is skewed to acidic residues over residues 217-227 (SEEETDSDIEV) and 234-243 (DPEDTSDETS). Basic residues predominate over residues 286 to 295 (RSARLRRRQP).

Auto-ubiquitinated.

The catalysed reaction is S-ubiquitinyl-[E2 ubiquitin-conjugating enzyme]-L-cysteine + [acceptor protein]-L-lysine = [E2 ubiquitin-conjugating enzyme]-L-cysteine + N(6)-ubiquitinyl-[acceptor protein]-L-lysine.. Evades nuclear antiviral defenses triggered by dsDNA viruses. Acts during the initial stages of lytic infection and the reactivation of latent viral genome. Prevents the antiviral effect of nuclear bodies by degrading host PML and SP100. This Equus caballus (Horse) protein is E3 ubiquitin-protein ligase ICP0 (63).